Consider the following 258-residue polypeptide: 5'-nucleotidase SurE (258 aa).

A divalent metal cation contacts are provided by D16, D17, S47, and N99.

The protein belongs to the SurE nucleotidase family. The cofactor is a divalent metal cation.

Its subcellular location is the cytoplasm. It catalyses the reaction a ribonucleoside 5'-phosphate + H2O = a ribonucleoside + phosphate. In terms of biological role, nucleotidase that shows phosphatase activity on nucleoside 5'-monophosphates. The polypeptide is 5'-nucleotidase SurE (Coxiella burnetii (strain Dugway 5J108-111)).